Reading from the N-terminus, the 258-residue chain is tRNA (guanine-N(7)-)-methyltransferase (258 aa).

The tract at residues 1-42 (MPETPLMRDNGPVNHADQDAPAVPEEGQTKDSKGSRLHPRVT) is disordered. S-adenosyl-L-methionine is bound by residues E90, E115, D142, and D165. The active site involves D165. Substrate contacts are provided by residues K169, D201, and 235 to 238 (TKFE).

The protein belongs to the class I-like SAM-binding methyltransferase superfamily. TrmB family.

It carries out the reaction guanosine(46) in tRNA + S-adenosyl-L-methionine = N(7)-methylguanosine(46) in tRNA + S-adenosyl-L-homocysteine. It functions in the pathway tRNA modification; N(7)-methylguanine-tRNA biosynthesis. Its function is as follows. Catalyzes the formation of N(7)-methylguanine at position 46 (m7G46) in tRNA. The protein is tRNA (guanine-N(7)-)-methyltransferase of Rhodococcus jostii (strain RHA1).